The sequence spans 356 residues: Heme A synthase (356 aa).

5 helical membrane-spanning segments follow: residues 23-43 (IAIW…VGGV), 105-125 (FHRL…LYFL), 141-161 (IFLL…SGLV), 173-193 (AHLG…LDLL), and 212-232 (STML…VAGI). Heme is bound at residue H274. The next 3 helical transmembrane spans lie at 276–296 (LIAW…RAVP), 307–327 (LLLI…LLVV), and 329–349 (LTLA…ALWV). Residue H335 coordinates heme.

The protein belongs to the COX15/CtaA family. Type 2 subfamily. Interacts with CtaB. The cofactor is heme b.

The protein localises to the cell membrane. It carries out the reaction Fe(II)-heme o + 2 A + H2O = Fe(II)-heme a + 2 AH2. It functions in the pathway porphyrin-containing compound metabolism; heme A biosynthesis; heme A from heme O: step 1/1. Functionally, catalyzes the conversion of heme O to heme A by two successive hydroxylations of the methyl group at C8. The first hydroxylation forms heme I, the second hydroxylation results in an unstable dihydroxymethyl group, which spontaneously dehydrates, resulting in the formyl group of heme A. This Nitrosospira multiformis (strain ATCC 25196 / NCIMB 11849 / C 71) protein is Heme A synthase.